The primary structure comprises 75 residues: Small ribosomal subunit protein bS18 (75 aa).

Belongs to the bacterial ribosomal protein bS18 family. As to quaternary structure, part of the 30S ribosomal subunit. Forms a tight heterodimer with protein bS6.

Its function is as follows. Binds as a heterodimer with protein bS6 to the central domain of the 16S rRNA, where it helps stabilize the platform of the 30S subunit. This Thermosipho melanesiensis (strain DSM 12029 / CIP 104789 / BI429) protein is Small ribosomal subunit protein bS18.